Here is a 373-residue protein sequence, read N- to C-terminus: Phosphoserine aminotransferase (373 aa).

R41 contributes to the L-glutamate binding site. Pyridoxal 5'-phosphate-binding positions include 75 to 76 (GT), W101, T152, D172, and Q195. Residue K196 is modified to N6-(pyridoxal phosphate)lysine. Pyridoxal 5'-phosphate is bound at residue 236-237 (NT).

The protein belongs to the class-V pyridoxal-phosphate-dependent aminotransferase family. SerC subfamily. In terms of assembly, homodimer. Requires pyridoxal 5'-phosphate as cofactor.

It is found in the cytoplasm. The enzyme catalyses O-phospho-L-serine + 2-oxoglutarate = 3-phosphooxypyruvate + L-glutamate. It catalyses the reaction 4-(phosphooxy)-L-threonine + 2-oxoglutarate = (R)-3-hydroxy-2-oxo-4-phosphooxybutanoate + L-glutamate. Its pathway is amino-acid biosynthesis; L-serine biosynthesis; L-serine from 3-phospho-D-glycerate: step 2/3. In terms of biological role, catalyzes the reversible conversion of 3-phosphohydroxypyruvate to phosphoserine and of 3-hydroxy-2-oxo-4-phosphonooxybutanoate to phosphohydroxythreonine. The protein is Phosphoserine aminotransferase of Lactobacillus helveticus (strain DPC 4571).